The chain runs to 84 residues: PAMP-induced secreted peptide 2 (84 aa).

A signal peptide spans 1–24 (MMMNKNVLSSILFFMLIGSVLVES). A disordered region spans residues 50–84 (KDSGPSPGEGHKVVDRKDTFRFVKHSGPSPSGPGH). Over residues 58–70 (EGHKVVDRKDTFR) the composition is skewed to basic and acidic residues. Pro77 and Pro79 each carry 4-hydroxyproline.

Contains 4-hydroxyproline; hydroxylated on Pro-77 and Pro-79.

The protein localises to the secreted. Its subcellular location is the extracellular space. The protein resides in the apoplast. Its function is as follows. Endogenous secreted peptide that acts as elicitor of immune response and positive regulator of defense response. Amplifies the immune response triggered by flg22, the active epitope of bacterial flagellin. Acts as a negative regulator of root growth. This chain is PAMP-induced secreted peptide 2, found in Arabidopsis thaliana (Mouse-ear cress).